Consider the following 345-residue polypeptide: Methylthioribose-1-phosphate isomerase (345 aa).

Substrate is bound by residues 44 to 46 (RGA), R87, and Q194. The active-site Proton donor is the D235. 245–246 (NK) lines the substrate pocket.

This sequence belongs to the eIF-2B alpha/beta/delta subunits family. MtnA subfamily.

The enzyme catalyses 5-(methylsulfanyl)-alpha-D-ribose 1-phosphate = 5-(methylsulfanyl)-D-ribulose 1-phosphate. It functions in the pathway amino-acid biosynthesis; L-methionine biosynthesis via salvage pathway; L-methionine from S-methyl-5-thio-alpha-D-ribose 1-phosphate: step 1/6. Functionally, catalyzes the interconversion of methylthioribose-1-phosphate (MTR-1-P) into methylthioribulose-1-phosphate (MTRu-1-P). This chain is Methylthioribose-1-phosphate isomerase, found in Heliobacterium modesticaldum (strain ATCC 51547 / Ice1).